Reading from the N-terminus, the 440-residue chain is Tyrosine--tRNA ligase (440 aa).

Tyr46 provides a ligand contact to L-tyrosine. Residues 51–60 (PTAPSLHIGN) carry the 'HIGH' region motif. L-tyrosine contacts are provided by Tyr181 and Gln185. A 'KMSKS' region motif is present at residues 241-245 (KFGKS). Lys244 contributes to the ATP binding site. The S4 RNA-binding domain maps to 373–430 (DRIAQAGVSAGLFKSISEARKTIKSGGVYVNNVRVEDEEQLLGDGDFLKGRFVVLRRG).

This sequence belongs to the class-I aminoacyl-tRNA synthetase family. TyrS type 1 subfamily. Homodimer.

It localises to the cytoplasm. It catalyses the reaction tRNA(Tyr) + L-tyrosine + ATP = L-tyrosyl-tRNA(Tyr) + AMP + diphosphate + H(+). In terms of biological role, catalyzes the attachment of tyrosine to tRNA(Tyr) in a two-step reaction: tyrosine is first activated by ATP to form Tyr-AMP and then transferred to the acceptor end of tRNA(Tyr). This Bifidobacterium animalis subsp. lactis (strain AD011) protein is Tyrosine--tRNA ligase.